Reading from the N-terminus, the 1520-residue chain is DNA-directed RNA polymerase subunit beta'' (1520 aa).

Zn(2+)-binding residues include cysteine 220, cysteine 296, cysteine 303, and cysteine 306. Composition is skewed to basic and acidic residues over residues 645–654 (TREEEYRTRE) and 664–674 (PENKYRTREGE). Disordered regions lie at residues 645–676 (TREE…GEGE) and 705–786 (YRTL…KKEG). Acidic residues-rich tracts occupy residues 730–748 (GEYE…SSED) and 756–779 (TLEE…PEED).

It belongs to the RNA polymerase beta' chain family. RpoC2 subfamily. In terms of assembly, in plastids the minimal PEP RNA polymerase catalytic core is composed of four subunits: alpha, beta, beta', and beta''. When a (nuclear-encoded) sigma factor is associated with the core the holoenzyme is formed, which can initiate transcription. Requires Zn(2+) as cofactor.

It is found in the plastid. The protein localises to the chloroplast. The catalysed reaction is RNA(n) + a ribonucleoside 5'-triphosphate = RNA(n+1) + diphosphate. In terms of biological role, DNA-dependent RNA polymerase catalyzes the transcription of DNA into RNA using the four ribonucleoside triphosphates as substrates. The protein is DNA-directed RNA polymerase subunit beta'' of Sorghum bicolor (Sorghum).